We begin with the raw amino-acid sequence, 637 residues long: Threonine--tRNA ligase (637 aa).

The region spanning 1 to 61 (MLNITLPDGS…VEDSAVQIIT (61 aa)) is the TGS domain. A catalytic region spans residues 242–533 (DHRKLGKQLD…LIENHAGSFP (292 aa)). Zn(2+) contacts are provided by cysteine 333, histidine 384, and histidine 510.

This sequence belongs to the class-II aminoacyl-tRNA synthetase family. In terms of assembly, homodimer. Zn(2+) is required as a cofactor.

The protein localises to the cytoplasm. The catalysed reaction is tRNA(Thr) + L-threonine + ATP = L-threonyl-tRNA(Thr) + AMP + diphosphate + H(+). In terms of biological role, catalyzes the attachment of threonine to tRNA(Thr) in a two-step reaction: L-threonine is first activated by ATP to form Thr-AMP and then transferred to the acceptor end of tRNA(Thr). Also edits incorrectly charged L-seryl-tRNA(Thr). This Neisseria meningitidis serogroup A / serotype 4A (strain DSM 15465 / Z2491) protein is Threonine--tRNA ligase.